Here is a 265-residue protein sequence, read N- to C-terminus: Glutamate racemase (265 aa).

Substrate-binding positions include aspartate 7 to serine 8 and tyrosine 39 to glycine 40. Cysteine 70 functions as the Proton donor/acceptor in the catalytic mechanism. Asparagine 71–threonine 72 lines the substrate pocket. The Proton donor/acceptor role is filled by cysteine 177.

Belongs to the aspartate/glutamate racemases family.

It catalyses the reaction L-glutamate = D-glutamate. It participates in cell wall biogenesis; peptidoglycan biosynthesis. Its function is as follows. Provides the (R)-glutamate required for cell wall biosynthesis. This Prochlorococcus marinus (strain NATL2A) protein is Glutamate racemase.